A 154-amino-acid polypeptide reads, in one-letter code: NADPH-dependent 7-cyano-7-deazaguanine reductase (154 aa).

Residues 1–13 (MSVTDVSGLSQLG) are compositionally biased toward polar residues. Residues 1-30 (MSVTDVSGLSQLGTKVDTPESPEKAVLEKV) are disordered. The segment covering 17–27 (DTPESPEKAVL) has biased composition (basic and acidic residues). Cys-52 serves as the catalytic Thioimide intermediate. The active-site Proton donor is Asp-59. Substrate-binding positions include 74–76 (VES) and 93–94 (HE).

It belongs to the GTP cyclohydrolase I family. QueF type 1 subfamily.

The protein localises to the cytoplasm. It catalyses the reaction 7-aminomethyl-7-carbaguanine + 2 NADP(+) = 7-cyano-7-deazaguanine + 2 NADPH + 3 H(+). It participates in tRNA modification; tRNA-queuosine biosynthesis. Catalyzes the NADPH-dependent reduction of 7-cyano-7-deazaguanine (preQ0) to 7-aminomethyl-7-deazaguanine (preQ1). This Agrobacterium fabrum (strain C58 / ATCC 33970) (Agrobacterium tumefaciens (strain C58)) protein is NADPH-dependent 7-cyano-7-deazaguanine reductase.